A 230-amino-acid chain; its full sequence is UPF0758 protein ABC2615 (230 aa).

The 123-residue stretch at V104–F226 folds into the MPN domain. Residues H175, H177, and D188 each coordinate Zn(2+). The short motif at H175 to D188 is the JAMM motif element.

Belongs to the UPF0758 family.

The sequence is that of UPF0758 protein ABC2615 from Shouchella clausii (strain KSM-K16) (Alkalihalobacillus clausii).